We begin with the raw amino-acid sequence, 314 residues long: Pantothenate synthetase (314 aa).

43-50 (MGALHEGH) lines the ATP pocket. H50 acts as the Proton donor in catalysis. Q75 is a (R)-pantoate binding site. A beta-alanine-binding site is contributed by Q75. A disordered region spans residues 112 to 131 (MYPDGTRTSVHPGPLGDDLE). Position 161 to 164 (161 to 164 (GEKD)) interacts with ATP. Q167 is a binding site for (R)-pantoate. ATP-binding positions include V190 and 198 to 201 (LSSR).

Belongs to the pantothenate synthetase family. In terms of assembly, homodimer.

It is found in the cytoplasm. The catalysed reaction is (R)-pantoate + beta-alanine + ATP = (R)-pantothenate + AMP + diphosphate + H(+). The protein operates within cofactor biosynthesis; (R)-pantothenate biosynthesis; (R)-pantothenate from (R)-pantoate and beta-alanine: step 1/1. Functionally, catalyzes the condensation of pantoate with beta-alanine in an ATP-dependent reaction via a pantoyl-adenylate intermediate. The sequence is that of Pantothenate synthetase from Mycolicibacterium smegmatis (strain ATCC 700084 / mc(2)155) (Mycobacterium smegmatis).